The following is a 482-amino-acid chain: ATP synthase subunit beta (482 aa).

168–175 (GGAGVGKT) is a binding site for ATP.

This sequence belongs to the ATPase alpha/beta chains family. As to quaternary structure, F-type ATPases have 2 components, CF(1) - the catalytic core - and CF(0) - the membrane proton channel. CF(1) has five subunits: alpha(3), beta(3), gamma(1), delta(1), epsilon(1). CF(0) has three main subunits: a(1), b(2) and c(9-12). The alpha and beta chains form an alternating ring which encloses part of the gamma chain. CF(1) is attached to CF(0) by a central stalk formed by the gamma and epsilon chains, while a peripheral stalk is formed by the delta and b chains.

Its subcellular location is the cell membrane. The catalysed reaction is ATP + H2O + 4 H(+)(in) = ADP + phosphate + 5 H(+)(out). Functionally, produces ATP from ADP in the presence of a proton gradient across the membrane. The catalytic sites are hosted primarily by the beta subunits. The polypeptide is ATP synthase subunit beta (Corynebacterium urealyticum (strain ATCC 43042 / DSM 7109)).